A 72-amino-acid chain; its full sequence is UPF0154 protein BH2350 (72 aa).

A helical membrane pass occupies residues 3-23 (WMILLWITLGIVIGIAIGFFI).

The protein belongs to the UPF0154 family.

It localises to the membrane. The protein is UPF0154 protein BH2350 of Halalkalibacterium halodurans (strain ATCC BAA-125 / DSM 18197 / FERM 7344 / JCM 9153 / C-125) (Bacillus halodurans).